Reading from the N-terminus, the 398-residue chain is Odorant receptor 59b (398 aa).

At 1-46 (MAVFKLIKPAPLTEKVQSRQGNIYLYRAMWLIGWIPPKEGVLRYVY) the chain is on the cytoplasmic side. The helical transmembrane segment at 47 to 67 (LFWTCVPFAFGVFYLPVGFII) threads the bilayer. Residues 68–84 (SYVQEFKNFTPGEFLTS) lie on the Extracellular side of the membrane. Residues 85 to 105 (LQVCINVYGASVKSTITYLFL) traverse the membrane as a helical segment. The Cytoplasmic segment spans residues 106–141 (WRLRKTEILLDSLDKRLANDSDRERIHNMVARCNYA). The helical transmembrane segment at 142-162 (FLIYSFIYCGYAGSTFLSYAL) threads the bilayer. At 163–179 (SGRPPWSVYNPFIDWRD) the chain is on the extracellular side. Residues 180 to 200 (GMGSLWIQAIFEYITMSFAVL) form a helical membrane-spanning segment. Topologically, residues 201 to 269 (QDQLSDTYPL…DMIRPMISRT (69 aa)) are cytoplasmic. A helical membrane pass occupies residues 270 to 290 (IFVQFALIGSVLGLTLVNVFF). The Extracellular portion of the chain corresponds to 291–293 (FSN). A helical membrane pass occupies residues 294–314 (FWKGVASLLFVITILLQTFPF). Topologically, residues 315 to 348 (CYTCNMLIDDAQDLSNEIFQSNWVDAEPRYKATL) are cytoplasmic. The helical transmembrane segment at 349–369 (VLFMHHVQQPIIFIAGGIFPI) threads the bilayer. At 370-398 (SMNSNITVAKFAFSIITIVRQMNLAEQFQ) the chain is on the extracellular side. Residue N374 is glycosylated (N-linked (GlcNAc...) asparagine).

This sequence belongs to the insect chemoreceptor superfamily. Heteromeric odorant receptor channel (TC 1.A.69) family. Or2a subfamily. As to quaternary structure, interacts with Orco. Complexes exist early in the endomembrane system in olfactory sensory neurons (OSNs), coupling these complexes to the conserved ciliary trafficking pathway. Expressed in olfactory sensory neurons in the antenna.

The protein localises to the cell membrane. Functionally, odorant receptor which mediates acceptance or avoidance behavior, depending on its substrates. The odorant receptor repertoire encodes a large collection of odor stimuli that vary widely in identity, intensity, and duration. Forms a complex with Orco to form odorant-sensing units, providing sensitive and prolonged odorant signaling and calcium permeability. Also plays a role in the response to N,N-Diethyl-meta-toluamide (DEET), the most widely used insect repellent worldwide. In Drosophila melanogaster (Fruit fly), this protein is Odorant receptor 59b (Or59b).